Here is a 141-residue protein sequence, read N- to C-terminus: Large ribosomal subunit protein uL16 (141 aa).

A compositionally biased stretch (basic residues) spans 1–17 (MLQPKRTKYRKVQKGKM). Residues 1–29 (MLQPKRTKYRKVQKGKMKGNSQRGHELSN) are disordered.

Belongs to the universal ribosomal protein uL16 family. In terms of assembly, part of the 50S ribosomal subunit.

In terms of biological role, binds 23S rRNA and is also seen to make contacts with the A and possibly P site tRNAs. This Flavobacterium psychrophilum (strain ATCC 49511 / DSM 21280 / CIP 103535 / JIP02/86) protein is Large ribosomal subunit protein uL16.